The primary structure comprises 422 residues: N-acylglucosamine 2-epimerase (422 aa).

The interval 185 to 206 (LLNLVEQLGEADEELAGISAEL) is leucine-zipper.

The protein belongs to the N-acylglucosamine 2-epimerase family. As to quaternary structure, homodimer. Forms a heterodimer with renin and inhibits its activity.

The catalysed reaction is an N-acyl-D-glucosamine = an N-acyl-D-mannosamine. The protein operates within amino-sugar metabolism; N-acetylneuraminate degradation. Functionally, catalyzes the interconversion of N-acetylglucosamine to N-acetylmannosamine. Involved in the N-glycolylneuraminic acid (Neu5Gc) degradation pathway. In Bos taurus (Bovine), this protein is N-acylglucosamine 2-epimerase (RENBP).